Reading from the N-terminus, the 265-residue chain is uncharacterized protein (265 aa).

The N-terminal stretch at 1-23 (MNYFRILYCSVLLFFSFFSCTSA) is a signal peptide. One can recognise a NodB homology domain in the interval 67–248 (KEIYLTFDNG…TLKQQGYTFK (182 aa)).

Belongs to the polysaccharide deacetylase family.

This is an uncharacterized protein from Geobacillus stearothermophilus (Bacillus stearothermophilus).